The sequence spans 383 residues: ATP phosphoribosyltransferase regulatory subunit (383 aa).

It belongs to the class-II aminoacyl-tRNA synthetase family. HisZ subfamily. As to quaternary structure, heteromultimer composed of HisG and HisZ subunits.

It is found in the cytoplasm. The protein operates within amino-acid biosynthesis; L-histidine biosynthesis; L-histidine from 5-phospho-alpha-D-ribose 1-diphosphate: step 1/9. Required for the first step of histidine biosynthesis. May allow the feedback regulation of ATP phosphoribosyltransferase activity by histidine. This Paraburkholderia phytofirmans (strain DSM 17436 / LMG 22146 / PsJN) (Burkholderia phytofirmans) protein is ATP phosphoribosyltransferase regulatory subunit.